Consider the following 190-residue polypeptide: Xanthine phosphoribosyltransferase (190 aa).

The xanthine site is built by L20 and N27. A 5-phospho-alpha-D-ribose 1-diphosphate-binding site is contributed by 128 to 132 (ANGKA). Residue K156 participates in xanthine binding.

The protein belongs to the purine/pyrimidine phosphoribosyltransferase family. Xpt subfamily. In terms of assembly, homodimer.

It is found in the cytoplasm. It catalyses the reaction XMP + diphosphate = xanthine + 5-phospho-alpha-D-ribose 1-diphosphate. It participates in purine metabolism; XMP biosynthesis via salvage pathway; XMP from xanthine: step 1/1. Functionally, converts the preformed base xanthine, a product of nucleic acid breakdown, to xanthosine 5'-monophosphate (XMP), so it can be reused for RNA or DNA synthesis. The protein is Xanthine phosphoribosyltransferase of Finegoldia magna (strain ATCC 29328 / DSM 20472 / WAL 2508) (Peptostreptococcus magnus).